The primary structure comprises 265 residues: Undecaprenyl-diphosphatase (265 aa).

8 helical membrane passes run 1–21 (MDWFQALVLALIQGLTEFLPI), 39–59 (QGLAFDVAVHLGTLLAVMMYY), 83–103 (LKLGLLVALATIPAVVFGFLG), 114–134 (ALVIAITTLVFGALLWASDAF), 144–164 (LGVAGAIFIGLAQALALIPGT), 188–208 (SFLLSIPVILGAGLLKTKDLI), 218–238 (MMALGVIVSAVTAYLTIVFFI), and 244–264 (VGMLPFVVYRLILGVALLFWL).

This sequence belongs to the UppP family.

It localises to the cell inner membrane. It carries out the reaction di-trans,octa-cis-undecaprenyl diphosphate + H2O = di-trans,octa-cis-undecaprenyl phosphate + phosphate + H(+). Its function is as follows. Catalyzes the dephosphorylation of undecaprenyl diphosphate (UPP). Confers resistance to bacitracin. The protein is Undecaprenyl-diphosphatase of Alcanivorax borkumensis (strain ATCC 700651 / DSM 11573 / NCIMB 13689 / SK2).